The following is a 115-amino-acid chain: Large ribosomal subunit protein bL19 (115 aa).

Belongs to the bacterial ribosomal protein bL19 family.

In terms of biological role, this protein is located at the 30S-50S ribosomal subunit interface and may play a role in the structure and function of the aminoacyl-tRNA binding site. This is Large ribosomal subunit protein bL19 from Baumannia cicadellinicola subsp. Homalodisca coagulata.